Reading from the N-terminus, the 1032-residue chain is Protein transport protein Sec24D (1032 aa).

The interval 1 to 260 (MSQQGYVATP…GPPQPQKKLD (260 aa)) is disordered. Residues 102-133 (PSAQSSYPGPISTSSVTQLGSQLSAMQINSYG) show a composition bias toward polar residues. A compositionally biased stretch (pro residues) spans 198-212 (GPPPPNAQYQPPPLP). At Ser266 the chain carries Phosphoserine. 4 residues coordinate Zn(2+): Cys363, Cys366, Cys385, and Cys388. Residues 363-388 (CNRCKAYMCPFMQFIEGGRRYQCGFC) form a zinc finger-like region. The stretch at 901–974 (MLPAAVRCSE…PYSQQLRMIM (74 aa)) is one Gelsolin-like repeat.

This sequence belongs to the SEC23/SEC24 family. SEC24 subfamily. COPII is composed of at least five proteins: the Sec23/24 complex, the Sec13/31 complex and Sar1. Interacts with TMED2 and TMED10. Interacts with CNIH4. Interacts with GOSR2 (via IxM motif) and STX5 (via IxM motif); recruits GOSR2 and STX5 into COPII-coated vesicles. Interacts with KCNA3; this interaction is reduced in the presence of KCNE4. Ubiquitously expressed, with higher amounts in placenta, pancreas, heart and liver.

Its subcellular location is the cytoplasmic vesicle. It is found in the COPII-coated vesicle membrane. It localises to the endoplasmic reticulum membrane. The protein resides in the cytoplasm. The protein localises to the cytosol. Functionally, component of the coat protein complex II (COPII) which promotes the formation of transport vesicles from the endoplasmic reticulum (ER). The coat has two main functions, the physical deformation of the endoplasmic reticulum membrane into vesicles and the selection of cargo molecules for their transport to the Golgi complex. Plays a central role in cargo selection within the COPII complex and together with SEC24C may have a different specificity compared to SEC24A and SEC24B. May more specifically package GPI-anchored proteins through the cargo receptor TMED10. May also be specific for IxM motif-containing cargos like the SNAREs GOSR2 and STX5. This chain is Protein transport protein Sec24D, found in Homo sapiens (Human).